Reading from the N-terminus, the 352-residue chain is Ribosomal RNA large subunit methyltransferase M (352 aa).

S-adenosyl-L-methionine contacts are provided by residues Ser-184, 217–220, Asp-236, Asp-256, and Asp-272; that span reads APGG. Lys-301 acts as the Proton acceptor in catalysis.

It belongs to the class I-like SAM-binding methyltransferase superfamily. RNA methyltransferase RlmE family. RlmM subfamily. As to quaternary structure, monomer.

It is found in the cytoplasm. The catalysed reaction is cytidine(2498) in 23S rRNA + S-adenosyl-L-methionine = 2'-O-methylcytidine(2498) in 23S rRNA + S-adenosyl-L-homocysteine + H(+). In terms of biological role, catalyzes the 2'-O-methylation at nucleotide C2498 in 23S rRNA. The protein is Ribosomal RNA large subunit methyltransferase M of Pseudomonas aeruginosa (strain LESB58).